The chain runs to 430 residues: Histidinol dehydrogenase (430 aa).

3 residues coordinate NAD(+): Tyr130, Gln191, and Asn214. Residues Ser237, Gln259, and His262 each contribute to the substrate site. The Zn(2+) site is built by Gln259 and His262. Active-site proton acceptor residues include Glu327 and His328. Positions 328, 361, 415, and 420 each coordinate substrate. Asp361 serves as a coordination point for Zn(2+). His420 provides a ligand contact to Zn(2+).

This sequence belongs to the histidinol dehydrogenase family. Zn(2+) serves as cofactor.

It carries out the reaction L-histidinol + 2 NAD(+) + H2O = L-histidine + 2 NADH + 3 H(+). It participates in amino-acid biosynthesis; L-histidine biosynthesis; L-histidine from 5-phospho-alpha-D-ribose 1-diphosphate: step 9/9. Catalyzes the sequential NAD-dependent oxidations of L-histidinol to L-histidinaldehyde and then to L-histidine. The protein is Histidinol dehydrogenase of Brucella abortus (strain 2308).